The following is a 262-amino-acid chain: Shikimate dehydrogenase (NADP(+)) (262 aa).

Shikimate-binding positions include 14–16 (SAS) and threonine 60. The Proton acceptor role is filled by lysine 64. Shikimate-binding residues include asparagine 85 and aspartate 100. Residues 121 to 125 (GAGGA), 145 to 150 (NRTAER), and phenylalanine 203 contribute to the NADP(+) site. Residue tyrosine 205 participates in shikimate binding. Glycine 227 contributes to the NADP(+) binding site.

The protein belongs to the shikimate dehydrogenase family. As to quaternary structure, homodimer.

The catalysed reaction is shikimate + NADP(+) = 3-dehydroshikimate + NADPH + H(+). It functions in the pathway metabolic intermediate biosynthesis; chorismate biosynthesis; chorismate from D-erythrose 4-phosphate and phosphoenolpyruvate: step 4/7. Functionally, involved in the biosynthesis of the chorismate, which leads to the biosynthesis of aromatic amino acids. Catalyzes the reversible NADPH linked reduction of 3-dehydroshikimate (DHSA) to yield shikimate (SA). This chain is Shikimate dehydrogenase (NADP(+)), found in Pyrobaculum aerophilum (strain ATCC 51768 / DSM 7523 / JCM 9630 / CIP 104966 / NBRC 100827 / IM2).